The chain runs to 646 residues: Secretogranin-1 (646 aa).

An N-terminal signal peptide occupies residues 1-20 (MQPAALLGLLGATVVAAVSS). Cysteines 36 and 57 form a disulfide. Residues 67–90 (ELKNEEKSENENTRFEVRLLRDPA) are compositionally biased toward basic and acidic residues. The segment at 67 to 483 (ELKNEEKSEN…GKQYAPHHIT (417 aa)) is disordered. S74 carries the post-translational modification Phosphoserine. T79 and T92 each carry phosphothreonine. 4 positions are modified to phosphoserine: S93, S99, S100, and S104. An O-linked (Xyl...) (chondroitin sulfate) serine glycan is attached at S93. T113 carries O-linked (GalNAc...) threonine glycosylation. Basic and acidic residues-rich tracts occupy residues 119-128 (SGGHSRERAG) and 137-173 (KEAKTRYSKSEGQNREEEMVKYQKRERGEVGSEERLS). Residues S123, S146, and S168 each carry the phosphoserine modification. A compositionally biased stretch (polar residues) spans 182–191 (AFLNQRNQTP). The O-linked (GalNAc...) threonine glycan is linked to T190. S205 carries the post-translational modification Phosphoserine. A compositionally biased stretch (basic and acidic residues) spans 208–228 (GLEKSHSRERSSQESGEETKS). A glycan (O-linked (Xyl...) (chondroitin sulfate) serine) is linked at S222. A compositionally biased stretch (basic residues) spans 260-270 (RHSRPRHHHGR). A phosphoserine mark is found at S276, S277, and S295. Y315 is subject to Sulfotyrosine. Residues 340–361 (GRGEHQALRRPSEESLEQENKR) show a composition bias toward basic and acidic residues. 2 positions are modified to phosphoserine: S351 and S354. Position 374 is a phosphotyrosine (Y374). 2 positions are modified to phosphoserine: S375 and S378. A compositionally biased stretch (basic and acidic residues) spans 406–425 (TDEKRFLGETHHRVQESQRD). At Y441 the chain carries Sulfotyrosine. 2 stretches are compositionally biased toward basic and acidic residues: residues 442-451 (GEEKGEEAAR) and 459-472 (DPRDADENREEARL). Q476 carries the post-translational modification Pyrrolidone carboxylic acid; in secretogranin-1(476-566). S502, S503, and S514 each carry phosphoserine. At Y535 the chain carries Sulfotyrosine. Q567 carries the post-translational modification Pyrrolidone carboxylic acid; in peptide BAM-1745. A Phosphoserine modification is found at S584. The tract at residues 588–620 (PDFYDSEEQMSPQHTAENEEEKAGQGVLTEEEE) is disordered. Y591 is modified (sulfotyrosine). Residues S593 and S598 each carry the phosphoserine modification. Q634 carries the pyrrolidone carboxylic acid; in Secretolytin; partial modification.

It belongs to the chromogranin/secretogranin protein family. Interacts with ITPR1 in the secretory granules. In terms of processing, O-glycosylated by the trisaccharide, GalNAc-Gal-NeuAc, on 2 sites in the N-terminal. May be glycated. Extensively phosphorylated. Post-translationally, differentially processed on numerous sites throughout the sequence depending on tissue type.

Its subcellular location is the cytoplasmic vesicle. The protein localises to the secretory vesicle membrane. It localises to the secreted. In terms of biological role, secretogranin-1 is a neuroendocrine secretory granule protein, which may be the precursor for other biologically active peptides. The 16 pairs of basic AA distributed throughout its sequence may be used as proteolytic cleavage sites. Its function is as follows. Secretolytin has antibacterial activity. This Bos taurus (Bovine) protein is Secretogranin-1 (CHGB).